A 990-amino-acid polypeptide reads, in one-letter code: Protein SUPPRESSOR OF MAX2 1 (990 aa).

Residues 8–167 form the Clp R domain; the sequence is IQQTLTPEAA…KATIEQSLNN (160 aa). Repeat regions lie at residues 12–83 and 96–167; these read LTPE…LERL and ISNA…SLNN. Positions 818 to 855 are disordered; it reads PKKEHGSGLSFDLNQAADTDDGSHNTSDLTTDNDQDEQ. An EAR motif is present at residues 828-832; that stretch reads FDLNQ.

It belongs to the ClpA/ClpB family. Interacts probably with TPL/TPR in an EAR-motif dependent manner. Interacts with TPL, TPR1, TPR2 and TPR4. Highly expressed in dry seeds. Expressed in seedlings, rosette leaves and senescing leaves. Detected in roots and axillary shoots. Expressed in the primary rosette buds and expanding leaves of adult rosettes, the vasculature of the hypocotyls, cotyledons, and mature roots, in the midvein and petioles of young leaves, the young leaf periphery, stomata, and the root caps.

Probable component of a transcriptional corepressor complex that acts downstream of MAX2 to negatively regulate karrikins/strigolactone responses. Probable target of MAX2 during germination and seedling photomorphogenesis. Acts probably specifically in the karrikin pathway. In Arabidopsis thaliana (Mouse-ear cress), this protein is Protein SUPPRESSOR OF MAX2 1.